A 235-amino-acid chain; its full sequence is Protein LIFEGUARD 1 (235 aa).

7 helical membrane passes run 33 to 53 (YSILSLQLLVTVGVSAVVYFV), 67 to 87 (LAVFFVILLLPLLLLWPLLAF), 95 to 115 (CIVLSIFTLSISFSVGICCSL), 120 to 140 (IVLEAAILTAVMVFGLTIYTF), 149 to 169 (FSFLGPFLFGALLIILVFTLL), 178 to 198 (LSSMIFSGIASIVFCGYIIFD), and 212 to 232 (ITAAIRLYLDVMNLFLSLLGI).

The protein belongs to the BI1 family. Expressed at very low in leaves.

It localises to the membrane. Its function is as follows. (Microbial infection) Facilitates the development of the powdery mildew fungus E.cruciferarum. In terms of biological role, (Microbial infection) May prevent cell death upon A.alternata f.sp. lycopersici (AAL) toxin treatment. The sequence is that of Protein LIFEGUARD 1 from Arabidopsis thaliana (Mouse-ear cress).